The primary structure comprises 505 residues: Trans-cinnamate 4-monooxygenase (505 aa).

Residues 3–23 form a helical membrane-spanning segment; the sequence is LLLLEKTLLGLFAAIIVASIV. Residues 213-218 and alanine 306 each bind (E)-cinnamate; that span reads RSRLAQ. Cysteine 447 contributes to the heme binding site.

Belongs to the cytochrome P450 family. Heme is required as a cofactor.

Its subcellular location is the membrane. The catalysed reaction is (E)-cinnamate + reduced [NADPH--hemoprotein reductase] + O2 = (E)-4-coumarate + oxidized [NADPH--hemoprotein reductase] + H2O + H(+). The protein operates within phenylpropanoid metabolism; trans-4-coumarate biosynthesis; trans-4-coumarate from trans-cinnamate: step 1/1. Catalyzes the first oxidative step of the phenylpropanoid pathway in higher plants by transforming trans-cinnamate into p-coumarate. The compounds formed by this pathway are essential components for lignification, pollination, and defense against ultraviolet light, predators and pathogens. The sequence is that of Trans-cinnamate 4-monooxygenase (CYP73A4) from Catharanthus roseus (Madagascar periwinkle).